We begin with the raw amino-acid sequence, 663 residues long: DNA ligase (663 aa).

NAD(+) is bound by residues 31–35, 80–81, and Glu109; these read DYEYD and SL. Lys111 (N6-AMP-lysine intermediate) is an active-site residue. NAD(+) is bound by residues Arg132, Glu167, Lys283, and Lys307. Positions 401, 404, 419, and 424 each coordinate Zn(2+). Positions 586–663 constitute a BRCT domain; the sequence is KIDNRFLGKT…TEEDLKDMIK (78 aa).

The protein belongs to the NAD-dependent DNA ligase family. LigA subfamily. Mg(2+) is required as a cofactor. It depends on Mn(2+) as a cofactor.

It carries out the reaction NAD(+) + (deoxyribonucleotide)n-3'-hydroxyl + 5'-phospho-(deoxyribonucleotide)m = (deoxyribonucleotide)n+m + AMP + beta-nicotinamide D-nucleotide.. Its function is as follows. DNA ligase that catalyzes the formation of phosphodiester linkages between 5'-phosphoryl and 3'-hydroxyl groups in double-stranded DNA using NAD as a coenzyme and as the energy source for the reaction. It is essential for DNA replication and repair of damaged DNA. In Clostridium kluyveri (strain NBRC 12016), this protein is DNA ligase.